The sequence spans 385 residues: Chorismate synthase (385 aa).

The segment at 43–63 (PDLDRRRPGTSRHVTQRNEPD) is disordered. Positions 48 and 54 each coordinate NADP(+). Residues 125-127 (RSS), 238-239 (NA), G278, 293-297 (KPTSS), and R319 each bind FMN. Over residues 363 to 372 (AQAPRTETAP) the composition is skewed to low complexity. The segment at 363-385 (AQAPRTETAPATPPLDAGDDIEA) is disordered.

Belongs to the chorismate synthase family. Homotetramer. FMNH2 is required as a cofactor.

The enzyme catalyses 5-O-(1-carboxyvinyl)-3-phosphoshikimate = chorismate + phosphate. It functions in the pathway metabolic intermediate biosynthesis; chorismate biosynthesis; chorismate from D-erythrose 4-phosphate and phosphoenolpyruvate: step 7/7. In terms of biological role, catalyzes the anti-1,4-elimination of the C-3 phosphate and the C-6 proR hydrogen from 5-enolpyruvylshikimate-3-phosphate (EPSP) to yield chorismate, which is the branch point compound that serves as the starting substrate for the three terminal pathways of aromatic amino acid biosynthesis. This reaction introduces a second double bond into the aromatic ring system. This Leptothrix cholodnii (strain ATCC 51168 / LMG 8142 / SP-6) (Leptothrix discophora (strain SP-6)) protein is Chorismate synthase.